The primary structure comprises 345 residues: Glycerol-3-phosphate dehydrogenase [NAD(P)+] (345 aa).

The NADPH site is built by Ser11, Trp12, Arg32, Arg33, and Lys105. Sn-glycerol 3-phosphate-binding residues include Lys105, Gly136, and Ser138. Ala140 serves as a coordination point for NADPH. Positions 191, 244, 254, 255, and 256 each coordinate sn-glycerol 3-phosphate. The Proton acceptor role is filled by Lys191. Arg255 is a binding site for NADPH. NADPH is bound by residues Val279 and Glu281.

Belongs to the NAD-dependent glycerol-3-phosphate dehydrogenase family.

The protein localises to the cytoplasm. It carries out the reaction sn-glycerol 3-phosphate + NAD(+) = dihydroxyacetone phosphate + NADH + H(+). It catalyses the reaction sn-glycerol 3-phosphate + NADP(+) = dihydroxyacetone phosphate + NADPH + H(+). The protein operates within membrane lipid metabolism; glycerophospholipid metabolism. Its function is as follows. Catalyzes the reduction of the glycolytic intermediate dihydroxyacetone phosphate (DHAP) to sn-glycerol 3-phosphate (G3P), the key precursor for phospholipid synthesis. This chain is Glycerol-3-phosphate dehydrogenase [NAD(P)+], found in Halalkalibacterium halodurans (strain ATCC BAA-125 / DSM 18197 / FERM 7344 / JCM 9153 / C-125) (Bacillus halodurans).